Reading from the N-terminus, the 243-residue chain is MGDTPFKATSMEDLNDTISKIINYRFKNDAILEEALTHPSLNKRNSKNQIENYERLEFLGDSILNMIVSAILFRLFPKEKEGALARRKTDLVCGNTIANVAKEIKLGNFIIMNNSERCNGGKRNLKNLENALEALIGAIYIDGGFANVKKFVTKHWEERAKGMLSLPQDPKTSLQEWTQKNKLPLPEYELMKQTGPAHSPEFTISICIENYGKVFACASSKKVAEQKAAELMLEKINNSEKTI.

Residues 15–144 enclose the RNase III domain; the sequence is NDTISKIINY…LIGAIYIDGG (130 aa). Glu57 lines the Mg(2+) pocket. Asp61 is a catalytic residue. Residues Asn130 and Glu133 each contribute to the Mg(2+) site. Glu133 is a catalytic residue. The region spanning 169-238 is the DRBM domain; that stretch reads DPKTSLQEWT…AELMLEKINN (70 aa).

The protein belongs to the ribonuclease III family. In terms of assembly, homodimer. It depends on Mg(2+) as a cofactor.

Its subcellular location is the cytoplasm. It carries out the reaction Endonucleolytic cleavage to 5'-phosphomonoester.. Its function is as follows. Digests double-stranded RNA. Involved in the processing of primary rRNA transcript to yield the immediate precursors to the large and small rRNAs (23S and 16S). Processes some mRNAs, and tRNAs when they are encoded in the rRNA operon. Processes pre-crRNA and tracrRNA of type II CRISPR loci if present in the organism. This is Ribonuclease 3 from Wolbachia sp. subsp. Brugia malayi (strain TRS).